A 209-amino-acid chain; its full sequence is Small ribosomal subunit protein uS4 (209 aa).

Residues 23-46 are disordered; that stretch reads SRNPLLKKPHPPGQHGMQRKKKSD. The 61-residue stretch at 93-153 folds into the S4 RNA-binding domain; the sequence is CRLDNMVYRM…EKSKRLQSVK (61 aa).

The protein belongs to the universal ribosomal protein uS4 family. As to quaternary structure, part of the 30S ribosomal subunit. Contacts protein S5. The interaction surface between S4 and S5 is involved in control of translational fidelity.

Functionally, one of the primary rRNA binding proteins, it binds directly to 16S rRNA where it nucleates assembly of the body of the 30S subunit. Its function is as follows. With S5 and S12 plays an important role in translational accuracy. This chain is Small ribosomal subunit protein uS4, found in Chlamydia pneumoniae (Chlamydophila pneumoniae).